A 143-amino-acid polypeptide reads, in one-letter code: Large ribosomal subunit protein eL28y (143 aa).

Belongs to the eukaryotic ribosomal protein eL28 family.

The protein is Large ribosomal subunit protein eL28y (RPL28C) of Arabidopsis thaliana (Mouse-ear cress).